The primary structure comprises 403 residues: Ribosomal RNA large subunit methyltransferase I (403 aa).

Residues 9 to 88 (YPRLVLSKGR…ESIDIAFFTR (80 aa)) form the PUA domain.

It belongs to the methyltransferase superfamily. RlmI family.

The protein localises to the cytoplasm. It catalyses the reaction cytidine(1962) in 23S rRNA + S-adenosyl-L-methionine = 5-methylcytidine(1962) in 23S rRNA + S-adenosyl-L-homocysteine + H(+). In terms of biological role, specifically methylates the cytosine at position 1962 (m5C1962) of 23S rRNA. This chain is Ribosomal RNA large subunit methyltransferase I, found in Salmonella enteritidis PT4 (strain P125109).